We begin with the raw amino-acid sequence, 291 residues long: Short-chain dehydrogenase/reductase GME11359 (291 aa).

Positions 18, 67, 96, 177, 181, and 209 each coordinate NADP(+). Tyr177 serves as the catalytic Proton acceptor. Residue Lys181 is the Lowers pKa of active site Tyr of the active site.

The protein belongs to the short-chain dehydrogenases/reductases (SDR) family.

The protein operates within secondary metabolite biosynthesis. In terms of biological role, short-chain dehydrogenase/reductase; part of the gene cluster that mediates the biosynthesis of dibenzodioxocinones such as pestalotiollide B, a novel class of inhibitors against cholesterol ester transfer protein (CEPT). The biosynthesis initiates from condensation of acetate and malonate units catalyzed by the non-reducing PKS pks8/GME11356. Pks8/GME11356 lacks a thioesterase (TE) domain, which is important to the cyclizing of the third ring of atrochrysone carboxylic acid, and the esterase GME11355 might play the role of TE and catalyzes the cyclization reaction of the C ring. The lactamase-like protein GME11357 (or other beta-lactamases in Pestalotiopsis microspora) probably hydrolyzes the thioester bond between the ACP of pks8/GME11356 and the intermediate to release atrochrysone carboxylic acid, which is spontaneously dehydrates to form endocrocin anthrone. Endocrocin anthrone is further converted to emodin via the endocrocin intermediate. Emodin is then oxidized by several enzymes such as the Baeyer-Villiger oxidase GME11358, the oxidoreductase GME11367, the short chain dehydrogenase/reductase GME11373, as well as by other oxidoreductases from the cluster, to modify the A and C rings and open the B ring, and finally yield monodictyphenone. The prenyltransferase GME11375 may catalyze the addition reaction between the C5 side chains and the carbon bone of dibenzodioxocinones. The remaining biochemical reactions to the final product dibenzodioxocinones should be methylation catalyzed by methyltransferase GME11366 and reduction and lactonization reaction catalyzed by a series of oxidordeuctases. The protein is Short-chain dehydrogenase/reductase GME11359 of Pestalotiopsis microspora.